A 215-amino-acid chain; its full sequence is Chaperone protein TorD (215 aa).

Belongs to the TorD/DmsD family. TorD subfamily.

The protein localises to the cytoplasm. In terms of biological role, involved in the biogenesis of TorA. Acts on TorA before the insertion of the molybdenum cofactor and, as a result, probably favors a conformation of the apoenzyme that is competent for acquiring the cofactor. The sequence is that of Chaperone protein TorD from Vibrio parahaemolyticus serotype O3:K6 (strain RIMD 2210633).